Here is a 344-residue protein sequence, read N- to C-terminus: Transcription factor AIG1 (344 aa).

One can recognise a bHLH domain in the interval 131-180 (AASKSHSEAERRRRERINTHLAKLRSILPNTTKTDKASLLAEVIQHMKEL). The segment at 313–344 (NDESNDNNNLEKSSSGGIKRQRTSKMVNRCYN) is disordered. Over residues 318–327 (DNNNLEKSSS) the composition is skewed to low complexity.

Homodimer. Interacts with LHW.

The protein localises to the nucleus. Its function is as follows. Transcription factor required for MONOPTEROS-dependent root initiation in embryo. Transcriptionally controlled by MONOPTEROS. This is Transcription factor AIG1 (BHLH32) from Arabidopsis thaliana (Mouse-ear cress).